Consider the following 324-residue polypeptide: Lipoyl synthase, chloroplastic (324 aa).

2 stretches are compositionally biased toward low complexity: residues 1–12 (MCGPTATTVANA) and 20–29 (KGLPPGLKKP). Residues 1-30 (MCGPTATTVANAGTGGETIKGLPPGLKKPP) form a disordered region. [4Fe-4S] cluster is bound by residues cysteine 58, cysteine 63, cysteine 69, cysteine 86, cysteine 90, cysteine 93, and serine 302. One can recognise a Radical SAM core domain in the interval 72–291 (GDTGTATVML…AYGEEVIGFR (220 aa)).

This sequence belongs to the radical SAM superfamily. Lipoyl synthase family. [4Fe-4S] cluster serves as cofactor.

The protein localises to the plastid. The protein resides in the chloroplast. It catalyses the reaction [[Fe-S] cluster scaffold protein carrying a second [4Fe-4S](2+) cluster] + N(6)-octanoyl-L-lysyl-[protein] + 2 oxidized [2Fe-2S]-[ferredoxin] + 2 S-adenosyl-L-methionine + 4 H(+) = [[Fe-S] cluster scaffold protein] + N(6)-[(R)-dihydrolipoyl]-L-lysyl-[protein] + 4 Fe(3+) + 2 hydrogen sulfide + 2 5'-deoxyadenosine + 2 L-methionine + 2 reduced [2Fe-2S]-[ferredoxin]. The protein operates within protein modification; protein lipoylation via endogenous pathway; protein N(6)-(lipoyl)lysine from octanoyl-[acyl-carrier-protein]: step 2/2. Catalyzes the radical-mediated insertion of two sulfur atoms into the C-6 and C-8 positions of the octanoyl moiety bound to the lipoyl domains of lipoate-dependent enzymes, thereby converting the octanoylated domains into lipoylated derivatives. The polypeptide is Lipoyl synthase, chloroplastic (Ostreococcus lucimarinus (strain CCE9901)).